Here is a 281-residue protein sequence, read N- to C-terminus: Phosphatidylglycerol--prolipoprotein diacylglyceryl transferase (281 aa).

A run of 4 helical transmembrane segments spans residues 23–43, 71–91, 107–127, and 133–153; these read IGPL…LFAW, FVIW…VLFY, WDGG…MILF, and ILVW…LGVV. Arg-154 lines the a 1,2-diacyl-sn-glycero-3-phospho-(1'-sn-glycerol) pocket. 3 helical membrane-spanning segments follow: residues 189–209, 217–237, and 247–267; these read LYEA…LVWG, GFVA…VEFF, and LFGG…LLGL.

It belongs to the Lgt family.

Its subcellular location is the cell inner membrane. The enzyme catalyses L-cysteinyl-[prolipoprotein] + a 1,2-diacyl-sn-glycero-3-phospho-(1'-sn-glycerol) = an S-1,2-diacyl-sn-glyceryl-L-cysteinyl-[prolipoprotein] + sn-glycerol 1-phosphate + H(+). Its pathway is protein modification; lipoprotein biosynthesis (diacylglyceryl transfer). Its function is as follows. Catalyzes the transfer of the diacylglyceryl group from phosphatidylglycerol to the sulfhydryl group of the N-terminal cysteine of a prolipoprotein, the first step in the formation of mature lipoproteins. The polypeptide is Phosphatidylglycerol--prolipoprotein diacylglyceryl transferase (Brucella canis (strain ATCC 23365 / NCTC 10854 / RM-666)).